Reading from the N-terminus, the 198-residue chain is MIGKCTHVVDCRETMGMGEGGGIAQRGTFAQCGSEVLAVAMSPGRRHITKPVCEITFALREANIMTSTLVLNAGAGVPQDAPSAGAGSLFGLTPAEVEQMKRHRLLVVHLGGVKNHITYKARLILRNVDRPCIVICEYPVDFEDFAKIGVKTRVVMPDEPKTKGTIVDIVSGVIRGETCPQEKLDEIIRKVKLALGGA.

In terms of assembly, MCR is composed of three subunits: alpha, beta, and gamma. The function of proteins C and D is not known.

In Methanothermobacter marburgensis (strain ATCC BAA-927 / DSM 2133 / JCM 14651 / NBRC 100331 / OCM 82 / Marburg) (Methanobacterium thermoautotrophicum), this protein is Methyl-coenzyme M reductase I operon protein C (mcrC).